Reading from the N-terminus, the 112-residue chain is uncharacterized protein (112 aa).

A run of 2 helical transmembrane segments spans residues 7 to 26 (PSFH…TLDY) and 36 to 58 (TYMH…FFLY).

It localises to the membrane. This is an uncharacterized protein from Saccharomyces cerevisiae (strain ATCC 204508 / S288c) (Baker's yeast).